The sequence spans 445 residues: MSEHIYSVSQLNQTVRVMLENQLRQVWLTGEISNFTQPVSGHWYLTLKDENAQVRCAMFRMKNMRVSFRPQNGMQVLVHASVSLYEPRGDYQLIIESMHPAGEGLLQQQFEALKMQLAAEGLFAQHLKKSLPPFCKSVGIVTSQTGAALQDILQILRRRDPSLQVVIYPTAVQGKEASAEIVQMIELANRRQEVDALIVGRGGGSLEDLWCFNEEMVARAIFHSQLPIISAVGHETDVTIADFVADLRAPTPSAAAELVSRDQQALLQQLVYQRQRLEMALDRLFKQKDDRLQRLRLRLHNQHPQRQLSAQKQLMQQLAHRLDWSMQAVLQQKQAQLRVLWARVEKNPLPFTLQKQKQDLAQLKVRLDVALKRELTFKHHQFAALCTKLDSISPLKVFARGYSIAQNAQGVAITQLKQVSVGERVITRLADGEIVSQVTDLRPRS.

This sequence belongs to the XseA family. In terms of assembly, heterooligomer composed of large and small subunits.

The protein localises to the cytoplasm. It catalyses the reaction Exonucleolytic cleavage in either 5'- to 3'- or 3'- to 5'-direction to yield nucleoside 5'-phosphates.. Functionally, bidirectionally degrades single-stranded DNA into large acid-insoluble oligonucleotides, which are then degraded further into small acid-soluble oligonucleotides. The polypeptide is Exodeoxyribonuclease 7 large subunit (Pasteurella multocida (strain Pm70)).